Here is a 227-residue protein sequence, read N- to C-terminus: Ornithine decarboxylase antizyme 1 (227 aa).

Belongs to the ODC antizyme family. Interacts with ODC1 and thereby sterically blocks ODC homodimerization. Forms a ternary complex with PSMB4 and OAZ1 before PSMB4 is incorporated into the 20S proteasome. Interacts with AZIN2; this interaction disrupts the interaction between the antizyme and ODC1. Interacts with FAM171A1.

Ornithine decarboxylase (ODC) antizyme protein that negatively regulates ODC activity and intracellular polyamine biosynthesis and uptake in response to increased intracellular polyamine levels. Binds to ODC monomers, inhibiting the assembly of the functional ODC homodimer, and targets the monomers for ubiquitin-independent proteolytic destruction by the 26S proteasome. Triggers ODC degradation by inducing the exposure of a cryptic proteasome-interacting surface of ODC. Stabilizes AZIN2 by interfering with its ubiquitination. Also inhibits cellular uptake of polyamines by inactivating the polyamine uptake transporter. SMAD1/OAZ1/PSMB4 complex mediates the degradation of the CREBBP/EP300 repressor SNIP1. Involved in the translocation of AZIN2 from ER-Golgi intermediate compartment (ERGIC) to the cytosol. The sequence is that of Ornithine decarboxylase antizyme 1 (Oaz1) from Mus musculus (Mouse).